Reading from the N-terminus, the 1023-residue chain is 2-oxoglutarate dehydrogenase complex component E1 (1023 aa).

A mitochondrion-targeting transit peptide spans 1–40; the sequence is MFHLRTCAAKLRPLTASQTVKTFSQNRPAAARTFQQIRCY. Residue Lys-74 is modified to N6-succinyllysine. Position 100 is a phosphoserine (Ser-100). The Ca(2+) site is built by His-143, Asp-156, and Asp-158. Arg-312 provides a ligand contact to thiamine diphosphate. N6-acetyllysine is present on Lys-401. Thiamine diphosphate is bound by residues Asp-411, Asn-444, and Ile-446. Mg(2+) is bound by residues Asp-411, Asn-444, and Ile-446. Residue Lys-534 forms a Glycyl lysine isopeptide (Lys-Gly) (interchain with G-Cter in ubiquitin) linkage. Lys-564 is modified (N6-succinyllysine). Residue Gln-676 participates in thiamine diphosphate binding. Lys-970 carries the N6-acetyllysine modification.

The protein belongs to the alpha-ketoglutarate dehydrogenase family. In terms of assembly, homodimer. The 2-oxoglutarate dehydrogenase complex is composed of OGDH (2-oxoglutarate dehydrogenase; E1), DLST (dihydrolipoamide succinyltransferase; E2), DLD (dihydrolipoamide dehydrogenase; E3) and the assembly factor KGD4. It contains multiple copies of the three enzymatic components (E1, E2 and E3). In the nucleus, the 2-oxoglutarate dehydrogenase complex associates with KAT2A. Interacts with ABHD11; this interaction maintains the functional lipoylation of the 2-oxoglutarate dehydrogenase complex. It depends on thiamine diphosphate as a cofactor. The cofactor is Mg(2+).

It localises to the mitochondrion. It is found in the nucleus. The enzyme catalyses N(6)-[(R)-lipoyl]-L-lysyl-[protein] + 2-oxoglutarate + H(+) = N(6)-[(R)-S(8)-succinyldihydrolipoyl]-L-lysyl-[protein] + CO2. With respect to regulation, calcium ions and ADP stimulate, whereas ATP and NADH reduce catalytic activity. Its function is as follows. 2-oxoglutarate dehydrogenase (E1o) component of the 2-oxoglutarate dehydrogenase complex (OGDHC). Participates in the first step, rate limiting for the overall conversion of 2-oxoglutarate to succinyl-CoA and CO(2) catalyzed by the whole OGDHC. Catalyzes the irreversible decarboxylation of 2-oxoglutarate (alpha-ketoglutarate) via the thiamine diphosphate (ThDP) cofactor and subsequent transfer of the decarboxylated acyl intermediate on an oxidized dihydrolipoyl group that is covalently amidated to the E2 enzyme (dihydrolipoyllysine-residue succinyltransferase or DLST). Plays a key role in the Krebs (citric acid) cycle, which is a common pathway for oxidation of fuel molecules, including carbohydrates, fatty acids, and amino acids. Can catalyze the decarboxylation of 2-oxoadipate in vitro, but at a much lower rate than 2-oxoglutarate. Mainly active in the mitochondrion. A fraction of the 2-oxoglutarate dehydrogenase complex also localizes in the nucleus and is required for lysine succinylation of histones: associates with KAT2A on chromatin and provides succinyl-CoA to histone succinyltransferase KAT2A. The sequence is that of 2-oxoglutarate dehydrogenase complex component E1 from Macaca fascicularis (Crab-eating macaque).